The chain runs to 351 residues: Palmitoyltransferase spe-10 (351 aa).

4 helical membrane-spanning segments follow: residues 21-43, 60-80, 198-218, and 241-261; these read TGWI…LWWS, IQAT…MWSL, YFLL…LTSL, and LFSF…LIIF. The DHHC domain occupies 154 to 204; that stretch reads KYCYECGHIKPDRARHCSSCGKCCIKYDHHCPWINMCVTHVNYKYFLLYII.

This sequence belongs to the DHHC palmitoyltransferase family. As to expression, expressed during spermatogenesis in budding and budded spermatids.

It is found in the membrane. It catalyses the reaction L-cysteinyl-[protein] + hexadecanoyl-CoA = S-hexadecanoyl-L-cysteinyl-[protein] + CoA. Functionally, involved in spermatogenesis, specifically in the morphogenesis of fibrous body-membranous organelles (FB-MO), which are Golgi-derived organelles used for transporting sperm-specific components, in spermatocytes and in their localization into budding spermatids. Required for the proper formation of spermatids and spermatozoa. This Caenorhabditis elegans protein is Palmitoyltransferase spe-10.